The chain runs to 293 residues: MKITEGYMPFKGFKTYYRIVGENTEGKKPLVLLHGGPGSTHNYFEVLDKIAESGRQVIMYDQIGCGNSFVEGHPELFNADTWIEELIELRKHLGLDEIHLLGQSWGGMQAIWYAIEYKPKGIKSYILSSTLSSAKLWEKEQKRRISYMSEVDQKALLDAVNTGDYSSKEYNDALERFMEMYCAGEVTEDSPECLRRPKKSGSEAYIVGWGQNEFSPTGTLSGYEFTDRLHEIKEPCLVTSGAIDLCSPYIAKTMYDRIPNSKWELFEYSRHMPFVEENEKYIKVLTEWLNAND.

In terms of domain architecture, AB hydrolase-1 spans 28–277 (KPLVLLHGGP…YSRHMPFVEE (250 aa)). The active-site Nucleophile is the Ser-104. Residue Asp-244 is part of the active site. His-271 (proton donor) is an active-site residue.

Belongs to the peptidase S33 family.

It carries out the reaction Release of N-terminal proline from a peptide.. Its function is as follows. Releases the N-terminal proline from various substrates. The sequence is that of Proline iminopeptidase from Clostridioides difficile (strain 630) (Peptoclostridium difficile).